Consider the following 228-residue polypeptide: 3,4-dihydroxy-2-butanone 4-phosphate synthase (228 aa).

D-ribulose 5-phosphate is bound by residues 37 to 38 (RE), Asp42, 150 to 154 (RRGHT), and Glu174. Glu38 provides a ligand contact to Mg(2+). Residue His153 participates in Mg(2+) binding.

It belongs to the DHBP synthase family. Homodimer. Mg(2+) is required as a cofactor. The cofactor is Mn(2+).

It carries out the reaction D-ribulose 5-phosphate = (2S)-2-hydroxy-3-oxobutyl phosphate + formate + H(+). It participates in cofactor biosynthesis; riboflavin biosynthesis; 2-hydroxy-3-oxobutyl phosphate from D-ribulose 5-phosphate: step 1/1. In terms of biological role, catalyzes the conversion of D-ribulose 5-phosphate to formate and 3,4-dihydroxy-2-butanone 4-phosphate. The chain is 3,4-dihydroxy-2-butanone 4-phosphate synthase from Photobacterium profundum (strain SS9).